A 152-amino-acid polypeptide reads, in one-letter code: Transcriptional regulator MraZ (152 aa).

SpoVT-AbrB domains lie at 5–51 and 80–123; these read VNSI…PLPE and AAEC…DEVL.

The protein belongs to the MraZ family. Forms oligomers.

It is found in the cytoplasm. The protein localises to the nucleoid. This chain is Transcriptional regulator MraZ, found in Methylococcus capsulatus (strain ATCC 33009 / NCIMB 11132 / Bath).